Reading from the N-terminus, the 206-residue chain is Thymidylate kinase (206 aa).

ATP is bound at residue 14-21 (GGEGIGKS).

The protein belongs to the thymidylate kinase family.

The catalysed reaction is dTMP + ATP = dTDP + ADP. Its function is as follows. Phosphorylation of dTMP to form dTDP in both de novo and salvage pathways of dTTP synthesis. The protein is Thymidylate kinase of Rickettsia bellii (strain RML369-C).